Reading from the N-terminus, the 402-residue chain is Myb-related protein 1 (402 aa).

An HTH myb-type domain is found at 42 to 102 (TDAKPRLKWT…HLQKYRLSKN (61 aa)). Residues 73-98 (PKTIMKVMGIPGLTLYHLKSHLQKYR) constitute a DNA-binding region (H-T-H motif). The stretch at 148 to 168 (SDALQMQIEVQRRLHEQLEVQ) forms a coiled coil. Residues 161 to 166 (LHEQLE) carry the LHEQLE motif. Polar residues predominate over residues 238-260 (QQMQKTYPPNSSLDSCLTSSEGT). Disordered stretches follow at residues 238 to 266 (QQMQKTYPPNSSLDSCLTSSEGTQKAPKM), 344 to 363 (EHRGRSSNNSEYTEERFNEN), and 382 to 402 (HDENYGTTRPKQFDLNGFSWN).

Belongs to the MYB-CC family. As to quaternary structure, isoforms 1 and 2: homodimer. Isoform 3: loss of dimerization. As to expression, expressed in phloem and/or cambium.

The protein localises to the nucleus. Its function is as follows. Transcription factor that may act on the GAL1 promoter. Acts redundantly with MYR2 as a repressor of flowering and organ elongation under decreased light intensity. Represses gibberellic acid (GA)-dependent responses and affects levels of bioactive GA. This chain is Myb-related protein 1, found in Arabidopsis thaliana (Mouse-ear cress).